A 94-amino-acid chain; its full sequence is Cell division protein FtsB (94 aa).

At 1–3 (MRV) the chain is on the cytoplasmic side. A helical transmembrane segment spans residues 4 to 21 (FALTLSLLLVWLLYTLMW). The Periplasmic portion of the chain corresponds to 22 to 94 (GKNGVMDFRA…YRIIGEESRQ (73 aa)). A coiled-coil region spans residues 33 to 76 (QAEIEVQQQVNANLHLRNQEMFAEIDDLRQGLDAIEERARNELG).

It belongs to the FtsB family. As to quaternary structure, part of a complex composed of FtsB, FtsL and FtsQ.

The protein localises to the cell inner membrane. Functionally, essential cell division protein. May link together the upstream cell division proteins, which are predominantly cytoplasmic, with the downstream cell division proteins, which are predominantly periplasmic. This is Cell division protein FtsB from Vibrio cholerae serotype O1 (strain ATCC 39315 / El Tor Inaba N16961).